We begin with the raw amino-acid sequence, 840 residues long: 9-beta-pimara-7,15-diene synthase, chloroplastic (840 aa).

Residues 1–56 constitute a chloroplast transit peptide; the sequence is MASPMEAVARSSLVLAPRRRRALGLLPAAAAPFVLDCRRRHNGGMRRPHVSFACSA. Residues Asp-589, Asp-593, Asn-733, Ser-737, and Glu-741 each coordinate Mg(2+). Residues 589–593 carry the DDXXD motif motif; the sequence is DDFFD.

It belongs to the terpene synthase family. It depends on Mg(2+) as a cofactor.

It is found in the plastid. Its subcellular location is the chloroplast. It catalyses the reaction 9alpha-copalyl diphosphate = 9beta-pimara-7,15-diene + diphosphate. Functionally, involved in the biosynthesis of momilactone A and B phytoalexins. Catalyzes the conversion of syn-copalyl diphosphate to the phytoalexin precursor syn-pimara-7,15-diene. The polypeptide is 9-beta-pimara-7,15-diene synthase, chloroplastic (Oryza sativa subsp. indica (Rice)).